The chain runs to 355 residues: Methylthioribose-1-phosphate isomerase (355 aa).

Substrate contacts are provided by residues 53–55 (RGA), R96, and Q205. The Proton donor role is filled by D246. 256 to 257 (NK) is a substrate binding site.

Belongs to the eIF-2B alpha/beta/delta subunits family. MtnA subfamily.

The catalysed reaction is 5-(methylsulfanyl)-alpha-D-ribose 1-phosphate = 5-(methylsulfanyl)-D-ribulose 1-phosphate. It functions in the pathway amino-acid biosynthesis; L-methionine biosynthesis via salvage pathway; L-methionine from S-methyl-5-thio-alpha-D-ribose 1-phosphate: step 1/6. Functionally, catalyzes the interconversion of methylthioribose-1-phosphate (MTR-1-P) into methylthioribulose-1-phosphate (MTRu-1-P). The chain is Methylthioribose-1-phosphate isomerase from Thermosynechococcus vestitus (strain NIES-2133 / IAM M-273 / BP-1).